The following is a 664-amino-acid chain: DNA mismatch repair protein MutL (664 aa).

Belongs to the DNA mismatch repair MutL/HexB family.

Its function is as follows. This protein is involved in the repair of mismatches in DNA. It is required for dam-dependent methyl-directed DNA mismatch repair. May act as a 'molecular matchmaker', a protein that promotes the formation of a stable complex between two or more DNA-binding proteins in an ATP-dependent manner without itself being part of a final effector complex. This chain is DNA mismatch repair protein MutL, found in Clostridium beijerinckii (strain ATCC 51743 / NCIMB 8052) (Clostridium acetobutylicum).